Here is a 259-residue protein sequence, read N- to C-terminus: MLPSTSVNSLVQGNGVLNSRDAARHTAGAKRYKYLRRLFRFRQMDFEFAAWQMLYLFTSPQRVYRNFHYRKQTKDQWARDDPAFLVLLSIWLCVSTIGFGFVLDMGFFETIKLLLWVVLIDCVGVGLLIATLMWFISNKYLVKRQSRDYDVEWGYAFDVHLNAFYPLLVILHFIQLFFINHVILTDTFIGYLVGNTLWLVAVGYYIYVTFLGYSALPFLKNTVILLYPFAPLILLYGLSLALGWNFTHTLCSFYKYRVK.

Met-1 is modified (N-acetylmethionine). The Cytoplasmic segment spans residues 1–82 (MLPSTSVNSL…TKDQWARDDP (82 aa)). Position 6 is a phosphoserine (Ser-6). A helical transmembrane segment spans residues 83–103 (AFLVLLSIWLCVSTIGFGFVL). The Lumenal portion of the chain corresponds to 104-115 (DMGFFETIKLLL). A helical transmembrane segment spans residues 116 to 136 (WVVLIDCVGVGLLIATLMWFI). At 137–163 (SNKYLVKRQSRDYDVEWGYAFDVHLNA) the chain is on the cytoplasmic side. Residues 164–184 (FYPLLVILHFIQLFFINHVIL) traverse the membrane as a helical segment. Residues 185–187 (TDT) are Lumenal-facing. Residues 188–208 (FIGYLVGNTLWLVAVGYYIYV) traverse the membrane as a helical segment. The Cytoplasmic segment spans residues 209–222 (TFLGYSALPFLKNT). A helical transmembrane segment spans residues 223 to 243 (VILLYPFAPLILLYGLSLALG). The Lumenal portion of the chain corresponds to 244–259 (WNFTHTLCSFYKYRVK).

It belongs to the unc-50 family. As to expression, present in periodontal ligament fibroblasts (at protein level).

The protein resides in the nucleus inner membrane. It is found in the golgi apparatus membrane. Functionally, involved in the cell surface expression of neuronal nicotinic receptors. Binds RNA. The polypeptide is Protein unc-50 homolog (UNC50) (Homo sapiens (Human)).